A 239-amino-acid chain; its full sequence is tRNA (guanine-N(7)-)-methyltransferase (239 aa).

4 residues coordinate S-adenosyl-L-methionine: Glu-69, Glu-94, Asp-121, and Asp-144. Asp-144 is an active-site residue. Substrate contacts are provided by residues Lys-148, Asp-180, and 217–220 (TKFE).

This sequence belongs to the class I-like SAM-binding methyltransferase superfamily. TrmB family. As to quaternary structure, monomer.

The catalysed reaction is guanosine(46) in tRNA + S-adenosyl-L-methionine = N(7)-methylguanosine(46) in tRNA + S-adenosyl-L-homocysteine. It participates in tRNA modification; N(7)-methylguanine-tRNA biosynthesis. Catalyzes the formation of N(7)-methylguanine at position 46 (m7G46) in tRNA. This Buchnera aphidicola subsp. Acyrthosiphon pisum (strain 5A) protein is tRNA (guanine-N(7)-)-methyltransferase.